A 429-amino-acid chain; its full sequence is MTGGSGVVVLDNGGGLLKAGFGGDMNPTAVVPNCMAKPPGSKKWLVADQLQAQDVDVTGMTLRRPIDRGYLINQEVQREVWERVIRNLLQVDPNNSSLLLVEPQFNPPALQHATDELVFEELGFKSLCVADAPSLVHLYEASRQPSLFRAQCSLVVDCGFSFTHASPVLQNFTLNYAVRRMDLGGKALTNYLKELISYRSLNVMDETLLIDDAKEKLCFVSLDVPGDLRLARLSSNDNPFRCSYILPDGITYKKGFVKDLDEACRYSSLPANGESVRKDSSDSDRSKFEDKKKPELSQNEFVLTNERFLVPEMLFHPIDLGMNQAGLAECIVRAIQACHPHLQPVLFERIILTGGSTLFPRFTERLEKELRPLVPDDYQVKIIAQEDPILGAWRGGSLLAHRPDFESMCITKSEYEEMGSMRCRRRFFH.

The disordered stretch occupies residues 272–293 (NGESVRKDSSDSDRSKFEDKKK). A compositionally biased stretch (basic and acidic residues) spans 275 to 293 (SVRKDSSDSDRSKFEDKKK).

It belongs to the actin family. ARP6 subfamily. Component of the SWR1 chromatin-remodeling complex.

The protein localises to the nucleus. Component of the SWR1 complex which mediates the ATP-dependent exchange of histone H2A for the H2A variant H2A.F/Z leading to transcriptional regulation of selected genes by chromatin remodeling. Involved in several developmental processes. May be involved in the regulation of pathogenesis-related proteins (PRs). In Oryza sativa subsp. indica (Rice), this protein is Actin-related protein 6 (ARP6).